The following is a 254-amino-acid chain: Alcohol dehydrogenase 1 (254 aa).

An NAD(+)-binding site is contributed by 10-33; the sequence is FVAGLGGIGLDTSREIVKSGPKNL. Position 138 (Ser-138) interacts with substrate. Tyr-151 functions as the Proton acceptor in the catalytic mechanism.

The protein belongs to the short-chain dehydrogenases/reductases (SDR) family. As to quaternary structure, homodimer.

The enzyme catalyses a primary alcohol + NAD(+) = an aldehyde + NADH + H(+). The catalysed reaction is a secondary alcohol + NAD(+) = a ketone + NADH + H(+). This is Alcohol dehydrogenase 1 (Adh1) from Drosophila hydei (Fruit fly).